The chain runs to 633 residues: DNA mismatch repair protein MutL (633 aa).

This sequence belongs to the DNA mismatch repair MutL/HexB family.

In terms of biological role, this protein is involved in the repair of mismatches in DNA. It is required for dam-dependent methyl-directed DNA mismatch repair. May act as a 'molecular matchmaker', a protein that promotes the formation of a stable complex between two or more DNA-binding proteins in an ATP-dependent manner without itself being part of a final effector complex. This is DNA mismatch repair protein MutL from Pseudomonas fluorescens (strain SBW25).